Consider the following 309-residue polypeptide: D-alanine--D-alanine ligase (309 aa).

Residues Lys109 to Glu304 form the ATP-grasp domain. Val135 to Thr190 contributes to the ATP binding site. The Mg(2+) site is built by Asp258, Glu271, and Asn273.

Belongs to the D-alanine--D-alanine ligase family. Mg(2+) serves as cofactor. It depends on Mn(2+) as a cofactor.

Its subcellular location is the cytoplasm. The catalysed reaction is 2 D-alanine + ATP = D-alanyl-D-alanine + ADP + phosphate + H(+). The protein operates within cell wall biogenesis; peptidoglycan biosynthesis. Its function is as follows. Cell wall formation. This chain is D-alanine--D-alanine ligase, found in Aromatoleum aromaticum (strain DSM 19018 / LMG 30748 / EbN1) (Azoarcus sp. (strain EbN1)).